Reading from the N-terminus, the 327-residue chain is Cobalamin biosynthesis protein CobD (327 aa).

Transmembrane regions (helical) follow at residues 60–80, 82–102, 159–179, and 304–324; these read GMWL…VLEL, LPFA…VLLA, DGIV…LFAY, and LFWS…LIGL.

It belongs to the CobD/CbiB family.

Its subcellular location is the cell membrane. It functions in the pathway cofactor biosynthesis; adenosylcobalamin biosynthesis. Functionally, converts cobyric acid to cobinamide by the addition of aminopropanol on the F carboxylic group. The sequence is that of Cobalamin biosynthesis protein CobD from Brucella anthropi (strain ATCC 49188 / DSM 6882 / CCUG 24695 / JCM 21032 / LMG 3331 / NBRC 15819 / NCTC 12168 / Alc 37) (Ochrobactrum anthropi).